The sequence spans 232 residues: Lipoprotein-releasing system ATP-binding protein LolD 2 (232 aa).

In terms of domain architecture, ABC transporter spans 11 to 231; sequence VYLHDIKRQY…SLQDGVVVEL (221 aa). 47–54 serves as a coordination point for ATP; that stretch reads APSGSGKS.

It belongs to the ABC transporter superfamily. Lipoprotein translocase (TC 3.A.1.125) family. The complex is composed of two ATP-binding proteins (LolD) and two transmembrane proteins (LolC and LolE).

It localises to the cell inner membrane. Its function is as follows. Part of the ABC transporter complex LolCDE involved in the translocation of mature outer membrane-directed lipoproteins, from the inner membrane to the periplasmic chaperone, LolA. Responsible for the formation of the LolA-lipoprotein complex in an ATP-dependent manner. This Rhodopseudomonas palustris (strain ATCC BAA-98 / CGA009) protein is Lipoprotein-releasing system ATP-binding protein LolD 2.